The chain runs to 246 residues: Pyridoxine 5'-phosphate synthase (246 aa).

3-amino-2-oxopropyl phosphate-binding residues include Asn-8 and Arg-19. His-44 functions as the Proton acceptor in the catalytic mechanism. The 1-deoxy-D-xylulose 5-phosphate site is built by Arg-46 and His-51. The active-site Proton acceptor is Glu-76. Residue Thr-106 coordinates 1-deoxy-D-xylulose 5-phosphate. The active-site Proton donor is His-198. Residues Asp-199 and 221-222 each bind 3-amino-2-oxopropyl phosphate; that span reads GH.

The protein belongs to the PNP synthase family. Homooctamer; tetramer of dimers.

The protein localises to the cytoplasm. The catalysed reaction is 3-amino-2-oxopropyl phosphate + 1-deoxy-D-xylulose 5-phosphate = pyridoxine 5'-phosphate + phosphate + 2 H2O + H(+). The protein operates within cofactor biosynthesis; pyridoxine 5'-phosphate biosynthesis; pyridoxine 5'-phosphate from D-erythrose 4-phosphate: step 5/5. Functionally, catalyzes the complicated ring closure reaction between the two acyclic compounds 1-deoxy-D-xylulose-5-phosphate (DXP) and 3-amino-2-oxopropyl phosphate (1-amino-acetone-3-phosphate or AAP) to form pyridoxine 5'-phosphate (PNP) and inorganic phosphate. This chain is Pyridoxine 5'-phosphate synthase, found in Brucella suis (strain ATCC 23445 / NCTC 10510).